Here is a 37-residue protein sequence, read N- to C-terminus: Large ribosomal subunit protein bL36c (37 aa).

This sequence belongs to the bacterial ribosomal protein bL36 family.

It localises to the plastid. This Cuscuta gronovii (Common dodder) protein is Large ribosomal subunit protein bL36c.